The chain runs to 23 residues: Phallacidin proprotein (23 aa).

Residue P1 is a propeptide. Positions 2–8 form a cross-link, cyclopeptide (Ala-Pro); the sequence is AWLVDCP. The 2'-cysteinyl-6'-hydroxytryptophan sulfoxide (Trp-Cys) cross-link spans 3–7; it reads WLVDC. Positions 9–23 are excised as a propeptide; sequence CVGDDVNRLLARGEK.

This sequence belongs to the MSDIN fungal toxin family. Post-translationally, processed by the macrocyclase-peptidase enzyme POPB to yield a toxic cyclic heptapeptide. POPB first removes 10 residues from the N-terminus. Conformational trapping of the remaining peptide forces the enzyme to release this intermediate rather than proceed to macrocyclization. The enzyme rebinds the remaining peptide in a different conformation and catalyzes macrocyclization of the N-terminal 7 residues.

In terms of biological role, major toxin that belongs to the bicyclic heptapeptides called phallotoxins. Although structurally related to amatoxins, phallotoxins have a different mode of action, which is the stabilization of F-actin. Phallotoxins are poisonous when administered parenterally, but not orally because of poor absorption. This Amanita fuliginea (East Asian brown death cap) protein is Phallacidin proprotein.